Here is a 92-residue protein sequence, read N- to C-terminus: YcgL domain-containing protein VC_1957 (92 aa).

The YcgL domain occupies 1–84; that stretch reads MLCSIYKSPK…PPENLLEQHK (84 aa). The interval 69 to 92 is disordered; the sequence is FLQLPPPPENLLEQHKERKARQTP.

The chain is YcgL domain-containing protein VC_1957 from Vibrio cholerae serotype O1 (strain ATCC 39315 / El Tor Inaba N16961).